Here is a 597-residue protein sequence, read N- to C-terminus: Aspartate--tRNA(Asp/Asn) ligase (597 aa).

Glutamate 176 serves as a coordination point for L-aspartate. Residues 200–203 form an aspartate region; that stretch reads QQFK. Residues arginine 222 and histidine 451 each contribute to the L-aspartate site. 222-224 is an ATP binding site; sequence RDE. Glutamate 489 serves as a coordination point for ATP. Residue arginine 496 coordinates L-aspartate. Residue 541–544 coordinates ATP; that stretch reads GIDR.

The protein belongs to the class-II aminoacyl-tRNA synthetase family. Type 1 subfamily. Homodimer.

The protein localises to the cytoplasm. The catalysed reaction is tRNA(Asx) + L-aspartate + ATP = L-aspartyl-tRNA(Asx) + AMP + diphosphate. Functionally, aspartyl-tRNA synthetase with relaxed tRNA specificity since it is able to aspartylate not only its cognate tRNA(Asp) but also tRNA(Asn). Reaction proceeds in two steps: L-aspartate is first activated by ATP to form Asp-AMP and then transferred to the acceptor end of tRNA(Asp/Asn). This is Aspartate--tRNA(Asp/Asn) ligase from Orientia tsutsugamushi (strain Boryong) (Rickettsia tsutsugamushi).